Here is a 399-residue protein sequence, read N- to C-terminus: Probable inactive 2-oxoglutarate-dependent dioxygenase AOP2 (399 aa).

The Fe2OG dioxygenase domain maps to 248–345; that stretch reads GGDDVEANDD…RYTAAIFTCP (98 aa). Residues H268, D270, and H325 each contribute to the Fe cation site. A 2-oxoglutarate-binding site is contributed by R336.

It belongs to the iron/ascorbate-dependent oxidoreductase family. Requires Fe(2+) as cofactor.

This chain is Probable inactive 2-oxoglutarate-dependent dioxygenase AOP2 (AOP2), found in Arabidopsis thaliana (Mouse-ear cress).